Here is a 245-residue protein sequence, read N- to C-terminus: 1-(5-phosphoribosyl)-5-[(5-phosphoribosylamino)methylideneamino] imidazole-4-carboxamide isomerase (245 aa).

The active-site Proton acceptor is the D8. The active-site Proton donor is the D130.

Belongs to the HisA/HisF family.

Its subcellular location is the cytoplasm. It catalyses the reaction 1-(5-phospho-beta-D-ribosyl)-5-[(5-phospho-beta-D-ribosylamino)methylideneamino]imidazole-4-carboxamide = 5-[(5-phospho-1-deoxy-D-ribulos-1-ylimino)methylamino]-1-(5-phospho-beta-D-ribosyl)imidazole-4-carboxamide. Its pathway is amino-acid biosynthesis; L-histidine biosynthesis; L-histidine from 5-phospho-alpha-D-ribose 1-diphosphate: step 4/9. The protein is 1-(5-phosphoribosyl)-5-[(5-phosphoribosylamino)methylideneamino] imidazole-4-carboxamide isomerase of Pseudomonas putida (strain GB-1).